A 331-amino-acid polypeptide reads, in one-letter code: Olfactory receptor 7E178 (331 aa).

The Extracellular portion of the chain corresponds to 1–47 (MMDRYSFIMHQHRDDTVWCPSKIEEQNITRISEFHLMGLSDDLQLQP). Asn-27 is a glycosylation site (N-linked (GlcNAc...) asparagine). The helical transmembrane segment at 48-68 (ILFGLFLSMYLVTLLGNLLII) threads the bilayer. At 69-80 (LTVSSDSHLHSP) the chain is on the cytoplasmic side. The chain crosses the membrane as a helical span at residues 81–100 (MYFFLSNLSLADVSFTSTTL). At 101 to 119 (PKMIVDIQTHNRAISYSGC) the chain is on the extracellular side. Cys-119 and Cys-201 are oxidised to a cystine. A helical transmembrane segment spans residues 120-140 (LTQMSFFMLFGCLDSLLLTAM). The Cytoplasmic portion of the chain corresponds to 141 to 164 (AYDRFVAICHPLHYQFIMNPRLCG). A helical transmembrane segment spans residues 165–185 (LLVFLSVLISLFVSQLHNSVV). Residues 186-218 (LQLTYFKSVDISHFFCDPSQLLNLACSDTFTNN) are Extracellular-facing. Residues 219 to 239 (IVMYFVGAISGFLPISGIFFS) form a helical membrane-spanning segment. The Cytoplasmic segment spans residues 240-266 (YYKIVSSILRMPSPGGKYKAFSTCGSH). Residues 267-287 (LSVVCLFYGTGLGVYLSSAVS) traverse the membrane as a helical segment. The Extracellular portion of the chain corresponds to 288-293 (LSPRKG). Residues 294–314 (AVASIVYTVVTPMLNPFIYSL) form a helical membrane-spanning segment. Topologically, residues 315-331 (RNQDIKRAMWRLLRKTV) are cytoplasmic.

It belongs to the G-protein coupled receptor 1 family.

It is found in the cell membrane. Functionally, odorant receptor. This is Olfactory receptor 7E178 from Mus musculus (Mouse).